A 246-amino-acid polypeptide reads, in one-letter code: Probable H/ACA ribonucleoprotein complex subunit 1-like protein (246 aa).

Disordered stretches follow at residues 1 to 61 (MSFR…GGYD) and 155 to 246 (PQVG…TKFD). RGG-box regions lie at residues 4-59 (RGGR…GRGG) and 161-223 (RGRG…RGRG). A compositionally biased stretch (basic and acidic residues) spans 168–180 (RGGDRGRGGDRGR). The segment covering 181–221 (GGFGGRGGGGGGFRGGSRGGFGGGDRGGFRGGRGGDFGGRG) has biased composition (gly residues).

This sequence belongs to the GAR1 family. Component of the small nucleolar ribonucleoprotein particle containing H/ACA-type snoRNAs (H/ACA snoRNPs).

The protein localises to the nucleus. It is found in the nucleolus. In terms of biological role, required for ribosome biogenesis. Part of a complex which catalyzes pseudouridylation of rRNA. This involves the isomerization of uridine such that the ribose is subsequently attached to C5, instead of the normal N1. Pseudouridine ('psi') residues may serve to stabilize the conformation of rRNAs. In Caenorhabditis briggsae, this protein is Probable H/ACA ribonucleoprotein complex subunit 1-like protein.